The following is a 187-amino-acid chain: MTSNGEGGEVVAKRRRKGIKELVQVALRGGCLAASATAMAVMLTATEEGVADIYGFKLTLSSNWSFSPSYQYVVGACAGTVLYSLLQLCLGVYRLVTGSPITPSRFQAWLCFTSDQLFCYLMMSAGSAGSGVTNLNKTGIRHTPLPDFCKTLSSFCNHVALSLLLVFLSFIFLASSSFFTVLVLSTP.

The Cytoplasmic segment spans residues 1-24 (MTSNGEGGEVVAKRRRKGIKELVQ). Residues 25 to 45 (VALRGGCLAASATAMAVMLTA) traverse the membrane as a helical segment. The Extracellular segment spans residues 46-71 (TEEGVADIYGFKLTLSSNWSFSPSYQ). The N-linked (GlcNAc...) asparagine glycan is linked to Asn-63. Residues 72–92 (YVVGACAGTVLYSLLQLCLGV) traverse the membrane as a helical segment. Topologically, residues 93 to 107 (YRLVTGSPITPSRFQ) are cytoplasmic. A helical membrane pass occupies residues 108 to 128 (AWLCFTSDQLFCYLMMSAGSA). The Extracellular segment spans residues 129–162 (GSGVTNLNKTGIRHTPLPDFCKTLSSFCNHVALS). Residue Asn-136 is glycosylated (N-linked (GlcNAc...) asparagine). Residues 163–183 (LLLVFLSFIFLASSSFFTVLV) traverse the membrane as a helical segment. The Cytoplasmic segment spans residues 184–187 (LSTP).

This sequence belongs to the Casparian strip membrane proteins (CASP) family. In terms of assembly, homodimer and heterodimers.

The protein localises to the cell membrane. The protein is CASP-like protein 3A2 of Arabidopsis thaliana (Mouse-ear cress).